A 554-amino-acid polypeptide reads, in one-letter code: MTQLSLFYQFPIQPIFEGHVRNTLICTEEDMQQLQNLGIRKLRKEKEEIQKNKILKNLLKTELDVLQAHVQTECQKLNTNLRDIENALLLENQKIIPSSETHSVLEESLQAKTVTQVTITQIDPAIHFTENFRPEMIKTFYNNTQMWSYTFGAWFYKLKRAFFTDSKLKRMLKLTYVDSLSITQELLSISINALEQITIYPMHDNLVSDLEAGLCLLTAFFASYPGTFLTENIKFVDVIQNLSQIFRYLNTEILATKNASPQDFYFGFNDPDKMKYFIPLCKGRHYAINTFSNHILIKIFIKKGVIKQVPGDQMSKGHVVIESKLTGTLTDDKLLYWTQILLQPKLGKEVPIFVHQQQYLRSGIVAIESLYLLWQILNSESIFGKRTGKFYLTTIFPHVNAEDVTETEFSSVNIQNFEFLMKNYVVPTYLANNESTISTLFPGLISIVVNESVRLGWDHNQNTLTQTNALHSQTKDNPFVEYIRSQLEETAELAVLEKHDKILFHFENGLNVTLSLALPRHRLFAMASSLFNVADLYDFLYFLVLGFIPVATVI.

Residues 1 to 46 are interaction with major capsid protein/MCP; that stretch reads MTQLSLFYQFPIQPIFEGHVRNTLICTEEDMQQLQNLGIRKLRKEK.

Belongs to the herpesviridae CVC2 protein family. Heterodimerizes with CVC1. Interacts with major capsid protein/MCP and triplex capsid protein 1/TRX1 at the pentamer vertices. Interacts with the large tegument protein/LTP.

The protein localises to the virion. It localises to the host nucleus. Capsid vertex-specific component that plays a role during viral DNA encapsidation, assuring correct genome cleavage and presumably stabilizing capsids that contain full-length viral genomes. Participates in the interaction between the capsid and the tegument through interaction with the large tegument protein/LTP. The sequence is that of Capsid vertex component 2 from Human herpesvirus 7 (strain JI) (HHV-7).